Consider the following 55-residue polypeptide: Large ribosomal subunit protein bL33 (55 aa).

It belongs to the bacterial ribosomal protein bL33 family.

The chain is Large ribosomal subunit protein bL33 from Jannaschia sp. (strain CCS1).